The primary structure comprises 442 residues: Protein bangles and beads (442 aa).

The disordered stretch occupies residues 47-442 (AVEPAPLKPE…SEESSESKEN (396 aa)). 3 stretches are compositionally biased toward basic and acidic residues: residues 55-67 (PEAE…KTIE), 114-125 (PEKKTLPEEAKP), and 133-146 (EAEK…RTEA). Residues 159-172 (AIEQAPEAPAANAE) are compositionally biased toward low complexity. Basic and acidic residues-rich tracts occupy residues 177-194 (VVDE…KSAE) and 204-240 (AEKE…EPAK). Composition is skewed to low complexity over residues 241-255 (AAEA…AATK) and 272-288 (SSPA…AAQA). Residues 329-339 (EAVKEQEKEQP) are compositionally biased toward basic and acidic residues. The segment covering 357 to 376 (TAAPAGAPEPTAAVAPAAVP) has biased composition (low complexity). Over residues 408–442 (EPKKSSEEKSDKSESKVDESSESKESEESSESKEN) the composition is skewed to basic and acidic residues. A phosphoserine mark is found at Ser430, Ser433, Ser436, and Ser437.

As to expression, expressed in the embryonic CNS, in sets of cells that are segmentally reiterated along the periphery of the nervous system.

Functionally, may play an important role during development. This Drosophila melanogaster (Fruit fly) protein is Protein bangles and beads (bnb).